Here is a 77-residue protein sequence, read N- to C-terminus: Small ribosomal subunit protein bS18 (77 aa).

The protein belongs to the bacterial ribosomal protein bS18 family. In terms of assembly, part of the 30S ribosomal subunit. Forms a tight heterodimer with protein bS6.

In terms of biological role, binds as a heterodimer with protein bS6 to the central domain of the 16S rRNA, where it helps stabilize the platform of the 30S subunit. In Desulforamulus reducens (strain ATCC BAA-1160 / DSM 100696 / MI-1) (Desulfotomaculum reducens), this protein is Small ribosomal subunit protein bS18.